Reading from the N-terminus, the 565-residue chain is MEQKIKFPRSQKVYLPGKLYPNIRVAMRKVEQVPSVSFEGEEKIATPNPEVYVYDTSGPFSDPSMSIDLKKGLPRLREEWIVGRGDVEQLPEITSEYGQMRRDDKSLDHLRFEHIALPYRAKKGEAITQMAYAKRGIITPEMEYVAIRENMNCEELGIETHITPEFVRKEIAEGHAVLPANINHPEAEPMIIGRNFLVKINTNIGNSATTSSIDEEVEKALWSCKWGGDTLMDLSTGENIHETREWIIRNCPVPVGTVPIYQALEKVNGVVEDLNWEIYRDTLIEQCEQGVDYFTIHAGIRRHNVHLADKRLCGIVSRGGSIMSKWCLVHDQESFLYEHFDDICDILAQYDVAVSLGDGLRPGSIHDANDEAQFAELDTMGELVLRAWEKNVQAFIEGPGHVPMHKIKENMERQIEKCHDAPFYTLGPLVTDIAPGYDHITSAIGAAQIGWLGTAMLCYVTPKEHLALPDKEDVRVGVITYKIAAHAADLAKGHPGAQVRDNALSKARYEFRWKDQFDLSLDPERAQGYFRAGHHIDGEYCTMCGPNFCAMRLSRDLKKNAKSDK.

Substrate-binding positions include N203, M232, Y261, H297, 317–319 (SRG), 358–361 (DGLR), and E397. Residue H401 participates in Zn(2+) binding. A substrate-binding site is contributed by Y424. A Zn(2+)-binding site is contributed by H465. [4Fe-4S] cluster contacts are provided by C541, C544, and C549.

It belongs to the ThiC family. The cofactor is [4Fe-4S] cluster.

It carries out the reaction 5-amino-1-(5-phospho-beta-D-ribosyl)imidazole + S-adenosyl-L-methionine = 4-amino-2-methyl-5-(phosphooxymethyl)pyrimidine + CO + 5'-deoxyadenosine + formate + L-methionine + 3 H(+). It functions in the pathway cofactor biosynthesis; thiamine diphosphate biosynthesis. In terms of biological role, catalyzes the synthesis of the hydroxymethylpyrimidine phosphate (HMP-P) moiety of thiamine from aminoimidazole ribotide (AIR) in a radical S-adenosyl-L-methionine (SAM)-dependent reaction. The polypeptide is Phosphomethylpyrimidine synthase (Bacteroides thetaiotaomicron (strain ATCC 29148 / DSM 2079 / JCM 5827 / CCUG 10774 / NCTC 10582 / VPI-5482 / E50)).